The following is a 160-amino-acid chain: SsrA-binding protein (160 aa).

The protein belongs to the SmpB family.

Its subcellular location is the cytoplasm. In terms of biological role, required for rescue of stalled ribosomes mediated by trans-translation. Binds to transfer-messenger RNA (tmRNA), required for stable association of tmRNA with ribosomes. tmRNA and SmpB together mimic tRNA shape, replacing the anticodon stem-loop with SmpB. tmRNA is encoded by the ssrA gene; the 2 termini fold to resemble tRNA(Ala) and it encodes a 'tag peptide', a short internal open reading frame. During trans-translation Ala-aminoacylated tmRNA acts like a tRNA, entering the A-site of stalled ribosomes, displacing the stalled mRNA. The ribosome then switches to translate the ORF on the tmRNA; the nascent peptide is terminated with the 'tag peptide' encoded by the tmRNA and targeted for degradation. The ribosome is freed to recommence translation, which seems to be the essential function of trans-translation. The chain is SsrA-binding protein from Novosphingobium aromaticivorans (strain ATCC 700278 / DSM 12444 / CCUG 56034 / CIP 105152 / NBRC 16084 / F199).